The following is a 47-amino-acid chain: Cytochrome b559 subunit beta (47 aa).

A helical membrane pass occupies residues 22 to 38; sequence WLAVHTLAIPTVFFLGA. Residue histidine 26 coordinates heme.

Belongs to the PsbE/PsbF family. As to quaternary structure, heterodimer of an alpha subunit and a beta subunit. PSII is composed of 1 copy each of membrane proteins PsbA, PsbB, PsbC, PsbD, PsbE, PsbF, PsbH, PsbI, PsbJ, PsbK, PsbL, PsbM, PsbT, PsbX, PsbY, PsbZ, Psb30/Ycf12, peripheral proteins PsbO, CyanoQ (PsbQ), PsbU, PsbV and a large number of cofactors. It forms dimeric complexes. Heme b serves as cofactor.

The protein localises to the cellular thylakoid membrane. Its function is as follows. This b-type cytochrome is tightly associated with the reaction center of photosystem II (PSII). PSII is a light-driven water:plastoquinone oxidoreductase that uses light energy to abstract electrons from H(2)O, generating O(2) and a proton gradient subsequently used for ATP formation. It consists of a core antenna complex that captures photons, and an electron transfer chain that converts photonic excitation into a charge separation. The sequence is that of Cytochrome b559 subunit beta from Synechococcus sp. (strain JA-3-3Ab) (Cyanobacteria bacterium Yellowstone A-Prime).